The primary structure comprises 1050 residues: Elongation factor 3 (1050 aa).

Val43 and His45 together coordinate ADP. The stretch at 46–83 is one HEAT 1 repeat; the sequence is DVPVEFFEDLKKQIQSKDAKVSLAALDAYKHIASTNGL. Residue Ser86 participates in ADP binding. 6 HEAT repeats span residues 89–126, 127–165, 169–206, 208–244, 245–282, and 288–326; these read PYVV…AITP, TAVK…TAKA, LRMP…TIDN, DIEK…EVTM, ATLS…LVED, and PFMD…VGAV. Thr395, His399, and Glu400 together coordinate ADP. ABC transporter domains lie at 429 to 646 and 672 to 998; these read DEGE…YYEL and VKVS…KKDD. Asn708, Glu927, Asn930, and His956 together coordinate ADP. The interval 980-1050 is disordered; sequence GHNWVQGQGS…DAYVSSDEEF (71 aa). A compositionally biased stretch (basic residues) spans 1013–1037; it reads AAKKKKKLSSAELRKKKKERMKKKK.

The protein belongs to the ABC transporter superfamily. ABCF family. EF3 subfamily. In terms of assembly, monomer.

Its subcellular location is the cytoplasm. The enzyme catalyses ATP + H2O = ADP + phosphate + H(+). It participates in protein biosynthesis; polypeptide chain elongation. Functionally, ribosome-dependent ATPase that functions in cytoplasmic translation elongation. Required for the ATP-dependent release of deacylated tRNA from the ribosomal E-site during protein biosynthesis. Stimulates the eEF1A-dependent binding of aminoacyl-tRNA to the ribosomal A-site, which has reduced affinity for tRNA as long as the E-site is occupied. Assists translation termination by stimulating the release of nascent protein from the ribosome by release factors. The sequence is that of Elongation factor 3 (CEF3) from Candida albicans (strain SC5314 / ATCC MYA-2876) (Yeast).